The following is a 597-amino-acid chain: Kelch-like protein 21 (597 aa).

The 69-residue stretch at 35 to 103 (LDVTLEAAGG…SYTGRVAVSG (69 aa)) folds into the BTB domain. The BACK domain occupies 138–239 (CLDMQDFAEA…RRFYLLAHVE (102 aa)). Kelch repeat units follow at residues 287–335 (ILVL…ALGN), 336–382 (DIYV…VLDG), 384–422 (LYVVAADSTERYDHTTDSWEALQPMTYPMDNCSTTACRG), 424–463 (LYAIGSLAGKETMVMQCYHPDMDLWSLVDCGQLPPWSFAP), 464–512 (KTVT…VLGG), and 513–560 (KLYV…SIFR). The segment at 570-597 (GRGFELDGGSSDMDVGQPRPPQNPAELH) is disordered. The segment covering 587–597 (PRPPQNPAELH) has biased composition (pro residues).

Component of the BCR(KLHL21) E3 ubiquitin ligase complex, at least composed of CUL3, KLHL21 and RBX1.

The protein resides in the cytoplasm. Its subcellular location is the cytoskeleton. It localises to the spindle. It functions in the pathway protein modification; protein ubiquitination. Functionally, substrate-specific adapter of a BCR (BTB-CUL3-RBX1) E3 ubiquitin-protein ligase complex required for efficient chromosome alignment and cytokinesis. The BCR(KLHL21) E3 ubiquitin ligase complex regulates localization of the chromosomal passenger complex (CPC) from chromosomes to the spindle midzone in anaphase and mediates the ubiquitination of AURKB. Ubiquitination of AURKB by BCR(KLHL21) E3 ubiquitin ligase complex may not lead to its degradation by the proteasome. The polypeptide is Kelch-like protein 21 (KLHL21) (Bos taurus (Bovine)).